The sequence spans 260 residues: Proteasome subunit alpha (260 aa).

The protein belongs to the peptidase T1A family. As to quaternary structure, the 20S proteasome core is composed of 14 alpha and 14 beta subunits that assemble into four stacked heptameric rings, resulting in a barrel-shaped structure. The two inner rings, each composed of seven catalytic beta subunits, are sandwiched by two outer rings, each composed of seven alpha subunits. The catalytic chamber with the active sites is on the inside of the barrel. Has a gated structure, the ends of the cylinder being occluded by the N-termini of the alpha-subunits. Is capped at one or both ends by the proteasome regulatory ATPase, PAN.

The protein localises to the cytoplasm. The formation of the proteasomal ATPase PAN-20S proteasome complex, via the docking of the C-termini of PAN into the intersubunit pockets in the alpha-rings, triggers opening of the gate for substrate entry. Interconversion between the open-gate and close-gate conformations leads to a dynamic regulation of the 20S proteasome proteolysis activity. In terms of biological role, component of the proteasome core, a large protease complex with broad specificity involved in protein degradation. The polypeptide is Proteasome subunit alpha (Thermococcus gammatolerans (strain DSM 15229 / JCM 11827 / EJ3)).